The following is a 327-amino-acid chain: Phenylalanine--tRNA ligase alpha subunit (327 aa).

Residue E252 coordinates Mg(2+).

It belongs to the class-II aminoacyl-tRNA synthetase family. Phe-tRNA synthetase alpha subunit type 1 subfamily. As to quaternary structure, tetramer of two alpha and two beta subunits. Mg(2+) serves as cofactor.

The protein localises to the cytoplasm. It carries out the reaction tRNA(Phe) + L-phenylalanine + ATP = L-phenylalanyl-tRNA(Phe) + AMP + diphosphate + H(+). This is Phenylalanine--tRNA ligase alpha subunit from Shewanella oneidensis (strain ATCC 700550 / JCM 31522 / CIP 106686 / LMG 19005 / NCIMB 14063 / MR-1).